Reading from the N-terminus, the 205-residue chain is High frequency lysogenization protein HflD homolog (205 aa).

It belongs to the HflD family.

Its subcellular location is the cytoplasm. It is found in the cell inner membrane. The chain is High frequency lysogenization protein HflD homolog from Photobacterium profundum (strain SS9).